The primary structure comprises 240 residues: uncharacterized protein (240 aa).

Positions 1-17 are cleaved as a signal peptide; that stretch reads MRMAFMLLALLFSFRNA.

This is an uncharacterized protein from Treponema pallidum (strain Nichols).